A 193-amino-acid chain; its full sequence is Cysteine and glycine-rich protein 1 (193 aa).

One can recognise an LIM zinc-binding 1 domain in the interval Cys-10–Cys-61. Positions Lys-64 to Lys-69 match the Nuclear localization signal motif. A Phosphoserine modification is found at Ser-81. The residue at position 84 (Lys-84) is an N6-acetyllysine. Lys-91 participates in a covalent cross-link: Glycyl lysine isopeptide (Lys-Gly) (interchain with G-Cter in SUMO2). 4 positions are modified to N6-acetyllysine: Lys-112, Lys-131, Lys-137, and Lys-161. In terms of domain architecture, LIM zinc-binding 2 spans Cys-119–Cys-170. Ser-192 carries the post-translational modification Phosphoserine.

Interacts with ASCC1; ASCC2 and TRIP4.

The protein resides in the nucleus. Its function is as follows. Could play a role in neuronal development. The sequence is that of Cysteine and glycine-rich protein 1 (CSRP1) from Pongo abelii (Sumatran orangutan).